Here is a 209-residue protein sequence, read N- to C-terminus: Protein ASG7 (209 aa).

Residues 1 to 49 (MTTLASSIEHKTKHLAAPFENDENTWMKKYCCQCKSCKMSVPVQPWLPR) lie on the Lumenal side of the membrane. The helical transmembrane segment at 50–70 (FFVFGILCPVFWLVNLLAWWF) threads the bilayer. Residues 71–184 (LQYWQPHELE…LLRKTFRNWN (114 aa)) are Cytoplasmic-facing. A phosphoserine mark is found at S121, S123, and S125. The residue at position 153 (T153) is a Phosphothreonine. A helical transmembrane segment spans residues 185–205 (LRSLLGLLIDSILIIFVVLLC). Over 206-209 (KKSR) the chain is Lumenal.

Its subcellular location is the endomembrane system. Required for receptor inhibition of inappropriately expressed a-factor receptor (STE3) in MAT a cells. Inhibits signaling by relocalizing the G protein beta-gamma (STE4-STE18) subunit to intracellular membranes. May also be a mechanism for the down-regulation of the mating pheromone response after the zygotic fusion event, promoting the transition of the new diploid cell to vegetative growth. This Saccharomyces cerevisiae (strain YJM789) (Baker's yeast) protein is Protein ASG7 (ASG7).